Consider the following 295-residue polypeptide: MPSLKDLRNRITSVKATQKITKAMQMVAAAKLRRAQNAAENGRPYAEKMASVLANLAGNLIGGVGAPRLLSGTGQDRVHLLVVCTGDRGLAGAFNSSIARLARDHANRLMAEGKTVKIMTVGKKGLDVLRRQFRDQIIASRDIRGNKPVDYPFAAEIADDILARFEAGEFDVATLFYSEFRSVISQIPTAQKIIPAELPQTDGAAKGAGSDAAMEFEPSEETILETLLPKNLTVQVFRALLENAASEQGARMSAMDSATRNAGEMIKKQTLIYNRTRQAMITKELIEIISGAEAL.

Belongs to the ATPase gamma chain family. As to quaternary structure, F-type ATPases have 2 components, CF(1) - the catalytic core - and CF(0) - the membrane proton channel. CF(1) has five subunits: alpha(3), beta(3), gamma(1), delta(1), epsilon(1). CF(0) has three main subunits: a, b and c.

It is found in the cell inner membrane. In terms of biological role, produces ATP from ADP in the presence of a proton gradient across the membrane. The gamma chain is believed to be important in regulating ATPase activity and the flow of protons through the CF(0) complex. This chain is ATP synthase gamma chain, found in Methylorubrum populi (strain ATCC BAA-705 / NCIMB 13946 / BJ001) (Methylobacterium populi).